Consider the following 1554-residue polypeptide: Lysine-specific demethylase 5C (1554 aa).

The JmjN domain occupies 14 to 55; the sequence is CPVFEPSWAEFRDPLGYIAKIRPIAEKSGICKIRPPADWQPP. The ARID domain maps to 79–169; sequence TRVKLNYLDQ…IVYPYEMYQS (91 aa). The segment covering 197–207 has biased composition (polar residues); it reads LRQSVQPSKFN. The disordered stretch occupies residues 197–227; the sequence is LRQSVQPSKFNSYGRRAKRLQPDPEPTEEDI. Glycyl lysine isopeptide (Lys-Gly) (interchain with G-Cter in SUMO2) cross-links involve residues K205, K229, K244, and K274. The interval 284–303 is disordered; that stretch reads ESTSPKTFLEGKEELSHSPE. S287 is subject to Phosphoserine. Residue K295 forms a Glycyl lysine isopeptide (Lys-Gly) (interchain with G-Cter in SUMO2) linkage. Phosphoserine is present on residues S301 and S317. The PHD-type 1 zinc finger occupies 326-372; sequence VCRMCSRGDEDDKLLLCDGCDDNYHIFCLLPPLPEIPKGVWRCPKCV. The JmjC domain maps to 468–634; that stretch reads EYATSGWNLN…AGRQCIEHYR (167 aa). Residues H514, D517, and H602 each contribute to the Fe cation site. Residues S893 and S897 each carry the phosphoserine modification. K1127 is covalently cross-linked (Glycyl lysine isopeptide (Lys-Gly) (interchain with G-Cter in SUMO2)). The PHD-type 2 zinc-finger motif lies at 1187–1248; it reads ICVCGQVPAG…DTKFLCPLCM (62 aa). Disordered stretches follow at residues 1319–1364 and 1437–1535; these read SKPE…EGSG and AERH…APFS. S1353 bears the Phosphoserine mark. Over residues 1442 to 1457 the composition is skewed to basic residues; that stretch reads SRTRGRALERRRRRKV. Residues 1458 to 1475 are compositionally biased toward basic and acidic residues; the sequence is DRGGEPDDPAREELEPKR. A compositionally biased stretch (acidic residues) spans 1482-1497; the sequence is EAEEVQEEEELEEETG.

The protein belongs to the JARID1 histone demethylase family. Part of two distinct complexes, one containing E2F6, and the other containing REST. Interacts with ZMYND8. Fe(2+) serves as cofactor.

It localises to the nucleus. The enzyme catalyses N(6),N(6),N(6)-trimethyl-L-lysyl(4)-[histone H3] + 3 2-oxoglutarate + 3 O2 = L-lysyl(4)-[histone H3] + 3 formaldehyde + 3 succinate + 3 CO2. Histone demethylase that specifically demethylates 'Lys-4' of histone H3, thereby playing a central role in histone code. Does not demethylate histone H3 'Lys-9', H3 'Lys-27', H3 'Lys-36', H3 'Lys-79' or H4 'Lys-20'. Demethylates trimethylated and dimethylated but not monomethylated H3 'Lys-4'. Participates in transcriptional repression of neuronal genes by recruiting histone deacetylases and REST at neuron-restrictive silencer elements. Represses the CLOCK-BMAL1 heterodimer-mediated transcriptional activation of the core clock component PER2. The protein is Lysine-specific demethylase 5C (Kdm5c) of Mus musculus (Mouse).